Reading from the N-terminus, the 61-residue chain is MRCVPVFIILLLLSPSAPSVDAHPKTKDDVPLASFHDDAKRTLQRLWQNTWCCRDHLRCCG.

The first 22 residues, Met-1–Ala-22, serve as a signal peptide directing secretion. The propeptide occupies His-23–Gln-44. Cys-60 is modified (cysteine amide).

The protein belongs to the conotoxin T superfamily. Post-translationally, contains 2 disulfide bonds that can be either 'C1-C3, C2-C4' or 'C1-C4, C2-C3', since these disulfide connectivities have been observed for conotoxins with cysteine framework V (for examples, see AC P0DQQ7 and AC P81755). Expressed by the venom duct.

Its subcellular location is the secreted. Has the ability to interact with the G-protein coupled somatostatin type 3 receptor (SSTR3). The ability was measured in competition binding experiments and the constant of inhibition (Ki) has been evaluated to be 3.5 uM. In Conus lividus (Livid cone), this protein is Conotoxin LiC32.